Consider the following 157-residue polypeptide: Nuclear cap-binding protein subunit 2 (157 aa).

MRNA contacts are provided by residues Tyr17, Tyr40, 109 to 113 (RADWD), 120 to 124 (RQYGR), and 130 to 131 (QV). In terms of domain architecture, RRM spans 37-115 (CTLYVGNLSY…RVIRADWDAG (79 aa)).

The protein belongs to the RRM NCBP2 family. As to quaternary structure, component of the nuclear cap-binding complex (CBC), a heterodimer composed of ncbp-1 and ncbp-2 that interacts with m7GpppG-capped RNA.

Its subcellular location is the nucleus. Component of the cap-binding complex (CBC), which binds co-transcriptionally to the 5' cap of pre-mRNAs and is involved in various processes such as pre-mRNA splicing and RNA-mediated gene silencing (RNAi). The CBC complex is involved in miRNA-mediated RNA interference and is required for primary microRNAs (miRNAs) processing. In the CBC complex, ncbp-2 recognizes and binds capped RNAs (m7GpppG-capped RNA) but requires ncbp-1 to stabilize the movement of its N-terminal loop and lock the CBC into a high affinity cap-binding state with the cap structure. This Caenorhabditis briggsae protein is Nuclear cap-binding protein subunit 2 (ncbp-2).